Consider the following 434-residue polypeptide: ATP-sensitive inward rectifier potassium channel 14 (434 aa).

Topologically, residues 1–81 (MGLARALRRL…LSDLFTTCVD (81 aa)) are cytoplasmic. The residue at position 79 (Cys-79) is an S-nitrosocysteine. Residues 82–108 (VRWRWMCLLFSCSFLASWLLFGLTFWL) traverse the membrane as a helical segment. Over 109 to 131 (IASLHGDLAAPPPPAPCFSQVAS) the chain is Extracellular. An intramembrane region (helical; Pore-forming) is located at residues 132–148 (FLAAFLFALETQTSIGY). Positions 145–150 (SIGYGV) match the Selectivity filter motif. Residues 149-157 (GVRSVTEEC) are Extracellular-facing. The helical transmembrane segment at 158 to 185 (PAAVAAVVLQCIAGCVLDAFVVGAVMAK) threads the bilayer. The Cytoplasmic segment spans residues 186 to 434 (MAKPKKRNET…TPTLALTLPP (249 aa)). Positions 398-434 (QEEDEEEDTKEGTSAETPDRAASPQALTPTLALTLPP) are disordered. Residues 407 to 416 (KEGTSAETPD) are compositionally biased toward basic and acidic residues. The segment covering 418 to 434 (AASPQALTPTLALTLPP) has biased composition (low complexity).

The protein belongs to the inward rectifier-type potassium channel (TC 1.A.2.1) family. KCNJ14 subfamily. As to expression, expressed predominantly in motoneurons of cranial nerve motor nuclei within the general somatic and special visceral motor cell column.

The protein resides in the membrane. It carries out the reaction K(+)(in) = K(+)(out). Its activity is regulated as follows. Channel activity is regulated by variations of cytosolic pH; channels are activated by alkaline and inhibited by acidic pH values. Inhibited by Ba(2+) and Cs(+) in a voltage-dependent manner; sensitivity to those inhibitors is lower than in other Kir channels. In terms of biological role, inward rectifier potassium channels are characterized by a greater tendency to allow potassium to flow into the cell rather than out of it. Their voltage dependence is regulated by the concentration of extracellular potassium; as external potassium is raised, the voltage range of the channel opening shifts to more positive voltages. The sequence is that of ATP-sensitive inward rectifier potassium channel 14 (Kcnj14) from Rattus norvegicus (Rat).